Reading from the N-terminus, the 274-residue chain is Thymidylate synthase (274 aa).

Residue Arg21 participates in dUMP binding. His51 serves as a coordination point for (6R)-5,10-methylene-5,6,7,8-tetrahydrofolate. DUMP is bound at residue 123 to 124 (RR). Cys156 functions as the Nucleophile in the catalytic mechanism. DUMP contacts are provided by residues 176–179 (RSAD), Asn187, and 217–219 (HIY). Asp179 contacts (6R)-5,10-methylene-5,6,7,8-tetrahydrofolate. Residue Ser273 coordinates (6R)-5,10-methylene-5,6,7,8-tetrahydrofolate.

The protein belongs to the thymidylate synthase family. Bacterial-type ThyA subfamily. Homodimer.

It is found in the cytoplasm. It catalyses the reaction dUMP + (6R)-5,10-methylene-5,6,7,8-tetrahydrofolate = 7,8-dihydrofolate + dTMP. It functions in the pathway pyrimidine metabolism; dTTP biosynthesis. In terms of biological role, catalyzes the reductive methylation of 2'-deoxyuridine-5'-monophosphate (dUMP) to 2'-deoxythymidine-5'-monophosphate (dTMP) while utilizing 5,10-methylenetetrahydrofolate (mTHF) as the methyl donor and reductant in the reaction, yielding dihydrofolate (DHF) as a by-product. This enzymatic reaction provides an intracellular de novo source of dTMP, an essential precursor for DNA biosynthesis. This is Thymidylate synthase from Francisella tularensis subsp. holarctica (strain FTNF002-00 / FTA).